The following is a 304-amino-acid chain: Signal recognition particle receptor FtsY (304 aa).

GTP is bound by residues 109-116 (GVNGVGKT), 191-195 (DTAGR), and 255-258 (TKLD).

This sequence belongs to the GTP-binding SRP family. FtsY subfamily. As to quaternary structure, part of the signal recognition particle protein translocation system, which is composed of SRP and FtsY. Post-translationally, sensitive to endogenous proteolytic cleavage between residues 18 and 19 and between residues 86 and 87.

The protein resides in the cell membrane. Its subcellular location is the cytoplasm. It carries out the reaction GTP + H2O = GDP + phosphate + H(+). Involved in targeting and insertion of nascent membrane proteins into the cytoplasmic membrane. Acts as a receptor for the complex formed by the signal recognition particle (SRP) and the ribosome-nascent chain (RNC). This Thermus aquaticus protein is Signal recognition particle receptor FtsY.